Here is a 394-residue protein sequence, read N- to C-terminus: Venom metalloproteinase antarease-like TtrivMP_A (394 aa).

The signal sequence occupies residues 1–16 (MISYLASIFLLATVSA). Positions 17-158 (VPSGRVEVVF…AENVSRMAEE (142 aa)) are excised as a propeptide. N-linked (GlcNAc...) asparagine glycosylation is present at Asn151. A Peptidase M12B domain is found at 162-390 (IVVEYYIVTD…KPTAFCIFEQ (229 aa)). A disulfide bond links Cys295 and Cys386. Zn(2+) is bound at residue His319. The active site involves Glu320. Residues His323 and His329 each contribute to the Zn(2+) site.

This sequence belongs to the venom metalloproteinase (M12B) family. The cofactor is Zn(2+). In terms of tissue distribution, expressed by the venom gland.

It localises to the secreted. Its activity is regulated as follows. Inhibited by EDTA. Its function is as follows. Acts as a metalloprotease. Penetrates intact tissue and specifically cleaves the vesicle-associated membrane protein 2 (VAMP2) (part of the SNARE complex) involved in pancreatic secretion, thus disrupting the normal vesicular traffic. The polypeptide is Venom metalloproteinase antarease-like TtrivMP_A (Tityus trivittatus (Argentinean scorpion)).